Reading from the N-terminus, the 206-residue chain is Tetrathionate response regulatory protein TtrR (206 aa).

The 115-residue stretch at 3–117 (TIHLLDDDTA…PLQAALERAL (115 aa)) folds into the Response regulatory domain. D52 bears the 4-aspartylphosphate mark. One can recognise an HTH luxR-type domain in the interval 134-194 (QQLTPKEREL…ELIRRFEKMA (61 aa)). A DNA-binding region (H-T-H motif) is located at residues 153–172 (NREIAEAMNIAVRTVEVHRA).

In terms of processing, phosphorylated by TtrS.

It is found in the cytoplasm. Member of the two-component regulatory system TtrR/TtrS, which is required for synthesis of tetrathionate reductase. Positively regulates transcription of the ttrBCA operon. During mice infection, the ability to use tetrathionate as an electron acceptor is a growth advantage for S.typhimurium over the competing microbiota in the lumen of the inflamed gut. This Salmonella typhimurium (strain LT2 / SGSC1412 / ATCC 700720) protein is Tetrathionate response regulatory protein TtrR (ttrR).